The sequence spans 261 residues: Proteasome subunit alpha type-4 (261 aa).

Residues serine 13 and serine 75 each carry the phosphoserine modification. Lysine 127 carries the post-translational modification N6-acetyllysine. A Phosphoserine modification is found at serine 173. Lysine 176 carries the N6-acetyllysine modification. Residues 240-261 form a disordered region; sequence HEEEEAKAEREKKEKEQKEKDK.

The protein belongs to the peptidase T1A family. In terms of assembly, the 26S proteasome consists of a 20S proteasome core and two 19S regulatory subunits. The 20S proteasome core is a barrel-shaped complex made of 28 subunits that are arranged in four stacked rings. The two outer rings are each formed by seven alpha subunits, and the two inner rings are formed by seven beta subunits. The proteolytic activity is exerted by three beta-subunits PSMB5, PSMB6 and PSMB7.

Its subcellular location is the cytoplasm. The protein resides in the nucleus. Component of the 20S core proteasome complex involved in the proteolytic degradation of most intracellular proteins. This complex plays numerous essential roles within the cell by associating with different regulatory particles. Associated with two 19S regulatory particles, forms the 26S proteasome and thus participates in the ATP-dependent degradation of ubiquitinated proteins. The 26S proteasome plays a key role in the maintenance of protein homeostasis by removing misfolded or damaged proteins that could impair cellular functions, and by removing proteins whose functions are no longer required. Associated with the PA200 or PA28, the 20S proteasome mediates ubiquitin-independent protein degradation. This type of proteolysis is required in several pathways including spermatogenesis (20S-PA200 complex) or generation of a subset of MHC class I-presented antigenic peptides (20S-PA28 complex). The sequence is that of Proteasome subunit alpha type-4 (PSMA4) from Macaca fascicularis (Crab-eating macaque).